The primary structure comprises 183 residues: Translation initiation factor IF-3 (183 aa).

It belongs to the IF-3 family. As to quaternary structure, monomer.

The protein resides in the cytoplasm. IF-3 binds to the 30S ribosomal subunit and shifts the equilibrium between 70S ribosomes and their 50S and 30S subunits in favor of the free subunits, thus enhancing the availability of 30S subunits on which protein synthesis initiation begins. This Serratia marcescens protein is Translation initiation factor IF-3.